Consider the following 317-residue polypeptide: Adenosine receptor A3 (317 aa).

At 1–14 (MPVNSTAVSLASVT) the chain is on the extracellular side. Asparagine 4 carries N-linked (GlcNAc...) asparagine glycosylation. The helical transmembrane segment at 15 to 37 (YISVEILIGLCAIVGNVLVIWVV) threads the bilayer. The Cytoplasmic segment spans residues 38–48 (KLNPSLQTTTF). The helical transmembrane segment at 49–72 (YFIVSLALADIAVGVLVMPLAIVI) threads the bilayer. The Extracellular segment spans residues 73 to 84 (SLGVTIHFYSCL). Cysteine 83 and cysteine 165 form a disulfide bridge. The chain crosses the membrane as a helical span at residues 85–106 (LMTCLLMIFTHASIMSLLAIAV). Over 107-126 (DRYLRVKLTVRYRRVTTQRR) the chain is Cytoplasmic. A helical membrane pass occupies residues 127–148 (IWLALGLCWLVSFLVGLTPMFG). Topologically, residues 149 to 176 (WNMKLSSADKNLTFLPCQFRSVMRMDYM) are extracellular. Residues 177–197 (VYFSFFTWILIPLVVMCAIYF) form a helical membrane-spanning segment. Residues 198 to 230 (DIFYVIRNRLSQNFSGSKETGAFYGREFKTAKS) are Cytoplasmic-facing. Residues 231-254 (LSLVLFLFALSWLPLSIINCIIYF) traverse the membrane as a helical segment. Over 255-260 (NGEVPQ) the chain is Extracellular. A helical membrane pass occupies residues 261–283 (IVLYLGILLSHANSMMNPIVYAY). The Cytoplasmic segment spans residues 284 to 317 (KIKKFKETYLLILKACVICQPSKSMDPSIEQTSE). A lipid anchor (S-palmitoyl cysteine) is attached at cysteine 302.

This sequence belongs to the G-protein coupled receptor 1 family. Phosphorylation on Thr-315 and Ser-316 may be crucial for rapid desensitization. Phosphorylation on Thr-315 may be necessary for phosphorylation on Ser-316 to occur.

The protein localises to the cell membrane. Receptor for adenosine. The activity of this receptor is mediated by G proteins which inhibits adenylyl cyclase. This Bos taurus (Bovine) protein is Adenosine receptor A3 (ADORA3).